The sequence spans 178 residues: Major urinary protein 4 (178 aa).

The N-terminal stretch at 1–16 (MKLLLCLGLTLVCIHA) is a signal peptide. Cysteines 80 and 173 form a disulfide.

This sequence belongs to the calycin superfamily. Lipocalin family. As to expression, expressed in lacrimal gland, parotid gland, sublingual gland, nasal mucus, and vomeronasal organ.

It is found in the secreted. In terms of biological role, binds pheromones, likely to displace pheromones complexed to urinary MUPs and transport them to the vomeronasal organ (VNO) where they associate with their neuronal receptor(s). MUP4 is highly specific for the male mouse pheromone 2-sec-butyl-4,5-dihydrothiazole (SBT). The protein is Major urinary protein 4 (Mup4) of Mus musculus (Mouse).